The sequence spans 254 residues: MRILLSNDDGVTAPGIQTLAAALREFAQVQVVAPNRNRSGSSNALTLESPLRSETLANGDISVIDGTPTDCVYLGVNALMRPRPDIVIAGINAGPNLGDDVIYSGTVAAAMEGRHLGFPALAVSLDGERHYDTAAAVTCRLLRMLSDAPLRSGRILNVNVPDVPLTAIRGWRVTRCGSRHPAQTVIHQQDPRGKPLMWIGPPGAKQDAGEETDFAAVAAGYISVTPLQVDLTAHGARGRLAEWLGRVDKGGAAW.

Asp-8, Asp-9, Ser-39, and Asn-92 together coordinate a divalent metal cation.

Belongs to the SurE nucleotidase family. The cofactor is a divalent metal cation.

The protein localises to the cytoplasm. The enzyme catalyses a ribonucleoside 5'-phosphate + H2O = a ribonucleoside + phosphate. It catalyses the reaction a ribonucleoside 3'-phosphate + H2O = a ribonucleoside + phosphate. The catalysed reaction is [phosphate](n) + H2O = [phosphate](n-1) + phosphate + H(+). Its function is as follows. Nucleotidase with a broad substrate specificity as it can dephosphorylate various ribo- and deoxyribonucleoside 5'-monophosphates and ribonucleoside 3'-monophosphates with highest affinity to 3'-AMP. Also hydrolyzes polyphosphate (exopolyphosphatase activity) with the preference for short-chain-length substrates (P20-25). Might be involved in the regulation of dNTP and NTP pools, and in the turnover of 3'-mononucleotides produced by numerous intracellular RNases (T1, T2, and F) during the degradation of various RNAs. In Edwardsiella ictaluri (strain 93-146), this protein is 5'/3'-nucleotidase SurE.